Consider the following 446-residue polypeptide: Hepatocyte nuclear factor 4-beta (446 aa).

The segment at residues 47–122 (NSFCAICGDR…AGMKKEAVQN (76 aa)) is a DNA-binding region (nuclear receptor). NR C4-type zinc fingers lie at residues 50-70 (CAIC…CDGC) and 86-110 (CRFS…LRKC). The region spanning 137–366 (NGSLSINVLT…SLLQELLLGG (230 aa)) is the NR LBD domain.

The protein belongs to the nuclear hormone receptor family. NR2 subfamily. As to quaternary structure, homodimerization is required for HNF4-alpha to bind to its recognition site. Expressed in liver, kidney, stomach, intestine, lung, ovary, and testis. Not expressed in fat, muscle and brain.

The protein localises to the nucleus. In terms of biological role, transcription factor; binds and activates the promoter for the HNF1-alpha gene. Seems to have a lower DNA binding activity than HNF4-alpha and is a weaker transactivator than the alpha isoform. This chain is Hepatocyte nuclear factor 4-beta (hnf4b), found in Xenopus laevis (African clawed frog).